Here is a 400-residue protein sequence, read N- to C-terminus: MIIKPKIRGFICTTTHPVGCEANVKEQIAYTKAQGPIKNAPKRVLVVGASSGYGLSSRIAAAFGGGAATIGVFFEKEGSEKKPGTAGFYNAAAFEKLAREEGLYAKSLNGDAFSNEAKQKTIDLIKEDLGQVDMVVYSLASPVRKLPETGELIRSALKPIGQTYTSTAVDTNKDIIIEASVEPATEQEIQDTVTVMGGEDWELWINALAEAGVLADGCKTVAYSYIGTELTWPIYWDGALGKAKMDLDRAASALNDKLSATGGSANVAVLKSVVTQASSAIPVMPLYIAMVFKKMREEGVHEGCMEQIYRMFSQRLYKEDGSAAEVDEKNRLRLDDWELRDDIQEHCRNLWPQITTENLKELTDYVEYKEEFLKLFGFGIDGVDYEADVNPDVATDFIAI.

Residues 48-53 (GASSGY), 74-75 (FE), 111-112 (DA), and 139-140 (LA) contribute to the NAD(+) site. Tyr225 contributes to the substrate binding site. The active-site Proton donor is the Tyr235. Residues Lys244 and 273–275 (VVT) contribute to the NAD(+) site.

It belongs to the TER reductase family. Monomer.

It catalyses the reaction a 2,3-saturated acyl-[ACP] + NAD(+) = a (2E)-enoyl-[ACP] + NADH + H(+). The protein operates within lipid metabolism; fatty acid biosynthesis. Its function is as follows. Involved in the final reduction of the elongation cycle of fatty acid synthesis (FAS II). Catalyzes the reduction of a carbon-carbon double bond in an enoyl moiety that is covalently linked to an acyl carrier protein (ACP). This Vibrio vulnificus (strain CMCP6) protein is Enoyl-[acyl-carrier-protein] reductase [NADH] 1.